We begin with the raw amino-acid sequence, 319 residues long: tRNA U34 carboxymethyltransferase (319 aa).

Residues Lys88, Trp102, Lys107, Gly126, 176 to 177 (LE), Met192, Tyr196, and Arg311 each bind carboxy-S-adenosyl-L-methionine.

The protein belongs to the class I-like SAM-binding methyltransferase superfamily. CmoB family. As to quaternary structure, homotetramer.

The catalysed reaction is carboxy-S-adenosyl-L-methionine + 5-hydroxyuridine(34) in tRNA = 5-carboxymethoxyuridine(34) in tRNA + S-adenosyl-L-homocysteine + H(+). In terms of biological role, catalyzes carboxymethyl transfer from carboxy-S-adenosyl-L-methionine (Cx-SAM) to 5-hydroxyuridine (ho5U) to form 5-carboxymethoxyuridine (cmo5U) at position 34 in tRNAs. The chain is tRNA U34 carboxymethyltransferase from Pseudomonas syringae pv. syringae (strain B728a).